The sequence spans 248 residues: uncharacterized protein (248 aa).

An N-terminal signal peptide occupies residues 1-26 (MVAPRISPKIVLVGFALFAIISASLA).

This is an uncharacterized protein from Acanthamoeba polyphaga mimivirus (APMV).